The chain runs to 251 residues: 3-deoxy-manno-octulosonate cytidylyltransferase (251 aa).

It belongs to the KdsB family.

Its subcellular location is the cytoplasm. The enzyme catalyses 3-deoxy-alpha-D-manno-oct-2-ulosonate + CTP = CMP-3-deoxy-beta-D-manno-octulosonate + diphosphate. Its pathway is nucleotide-sugar biosynthesis; CMP-3-deoxy-D-manno-octulosonate biosynthesis; CMP-3-deoxy-D-manno-octulosonate from 3-deoxy-D-manno-octulosonate and CTP: step 1/1. It functions in the pathway bacterial outer membrane biogenesis; lipopolysaccharide biosynthesis. Functionally, activates KDO (a required 8-carbon sugar) for incorporation into bacterial lipopolysaccharide in Gram-negative bacteria. In Geotalea uraniireducens (strain Rf4) (Geobacter uraniireducens), this protein is 3-deoxy-manno-octulosonate cytidylyltransferase.